Here is a 123-residue protein sequence, read N- to C-terminus: Probable non-functional immunoglobulin lambda variable 11-55 (123 aa).

An N-terminal signal peptide occupies residues 1 to 19 (MALTPLLLLLLSHCTGSLS). The framework-1 stretch occupies residues 20–44 (RPVLTQPPSLSASPGATARLPCTLS). The Ig-like domain occupies 21 to 123 (PVLTQPPSLS…YCQVYESSAN (103 aa)). A disulfide bridge connects residues C41 and C115. The complementarity-determining-1 stretch occupies residues 45 to 53 (SDLSVGGKN). The interval 54 to 70 (MFWYQQKLGSSPRLFLY) is framework-2. Positions 71–77 (HYSDSDK) are complementarity-determining-2. Residues 78–115 (QLGPGVPSRVSGSKETSSNTAFLLISGLQPEDEADYYC) form a framework-3 region. Residues 116–123 (QVYESSAN) are complementarity-determining-3.

In terms of assembly, immunoglobulins are composed of two identical heavy chains and two identical light chains; disulfide-linked.

It localises to the secreted. The protein localises to the cell membrane. Functionally, probable non-functional open reading frame (ORF) of V region of the variable domain of immunoglobulin light chains. Non-functional ORF generally cannot participate in the synthesis of a productive immunoglobulin chain due to altered V-(D)-J or switch recombination and/or splicing site (at mRNA level) and/or conserved amino acid change (protein level). Immunoglobulins, also known as antibodies, are membrane-bound or secreted glycoproteins produced by B lymphocytes. In the recognition phase of humoral immunity, the membrane-bound immunoglobulins serve as receptors which, upon binding of a specific antigen, trigger the clonal expansion and differentiation of B lymphocytes into immunoglobulins-secreting plasma cells. Secreted immunoglobulins mediate the effector phase of humoral immunity, which results in the elimination of bound antigens. The antigen binding site is formed by the variable domain of one heavy chain, together with that of its associated light chain. Thus, each immunoglobulin has two antigen binding sites with remarkable affinity for a particular antigen. The variable domains are assembled by a process called V-(D)-J rearrangement and can then be subjected to somatic hypermutations which, after exposure to antigen and selection, allow affinity maturation for a particular antigen. The polypeptide is Probable non-functional immunoglobulin lambda variable 11-55 (Homo sapiens (Human)).